The sequence spans 271 residues: Solute carrier family 66 member 2 (271 aa).

3 helical membrane passes run 8–28, 49–69, and 76–96; these read WLLV…MVFG, FSTY…LFWF, and PLLW…KLCT. The PQ-loop 1 domain occupies 14–80; that stretch reads HQLVSWGAAA…RRFESPLLWQ (67 aa). Ser-110 carries the post-translational modification Phosphoserine. 3 helical membrane passes run 145–165, 168–188, and 232–252; these read DYVQ…YLSI, ALFV…LGVP, and VCGL…YAFA. A PQ-loop 2 domain is found at 178-233; it reads AVLTEAMLGVPQLYRNHRHQSTEGMSIKMVLMWTSGDAFKTAYFLLKGAPLQFSVC.

The protein resides in the membrane. This chain is Solute carrier family 66 member 2, found in Homo sapiens (Human).